The chain runs to 137 residues: ATP synthase epsilon chain 1 (137 aa).

The protein belongs to the ATPase epsilon chain family. F-type ATPases have 2 components, CF(1) - the catalytic core - and CF(0) - the membrane proton channel. CF(1) has five subunits: alpha(3), beta(3), gamma(1), delta(1), epsilon(1). CF(0) has three main subunits: a, b and c.

It localises to the cell inner membrane. Produces ATP from ADP in the presence of a proton gradient across the membrane. The chain is ATP synthase epsilon chain 1 (atpC1) from Ralstonia nicotianae (strain ATCC BAA-1114 / GMI1000) (Ralstonia solanacearum).